Here is a 292-residue protein sequence, read N- to C-terminus: Homoserine kinase (292 aa).

Residue 84-94 participates in ATP binding; sequence PLARGMGSSSA.

This sequence belongs to the GHMP kinase family. Homoserine kinase subfamily.

It is found in the cytoplasm. It carries out the reaction L-homoserine + ATP = O-phospho-L-homoserine + ADP + H(+). The protein operates within amino-acid biosynthesis; L-threonine biosynthesis; L-threonine from L-aspartate: step 4/5. In terms of biological role, catalyzes the ATP-dependent phosphorylation of L-homoserine to L-homoserine phosphate. The protein is Homoserine kinase of Thermus thermophilus (strain ATCC BAA-163 / DSM 7039 / HB27).